We begin with the raw amino-acid sequence, 100 residues long: Putative antiporter subunit mnhF2 (100 aa).

The next 3 membrane-spanning stretches (helical) occupy residues 6 to 26 (TNFF…IGLF), 38 to 58 (VVAF…VSVI), and 62 to 82 (VSFL…SVSI).

Belongs to the CPA3 antiporters (TC 2.A.63) subunit F family. May form a heterooligomeric complex that consists of seven subunits: mnhA2, mnhB2, mnhC2, mnhD2, mnhE2, mnhF2 and mnhG2.

Its subcellular location is the cell membrane. The polypeptide is Putative antiporter subunit mnhF2 (mnhF2) (Staphylococcus haemolyticus (strain JCSC1435)).